A 405-amino-acid chain; its full sequence is Adenylosuccinate synthetase (405 aa).

GTP is bound by residues 12 to 18 and 40 to 42; these read GDEGKGK and GHT. Aspartate 13 acts as the Proton acceptor in catalysis. Positions 13 and 40 each coordinate Mg(2+). IMP is bound by residues 13–16, 38–41, threonine 121, arginine 135, glutamine 213, threonine 228, and arginine 297; these read DEGK and NAGH. Residue histidine 41 is the Proton donor of the active site. 293–299 is a substrate binding site; sequence TTTGRAR. Residues arginine 299, 325 to 327, and 390 to 392 each bind GTP; these read KMD and SAG.

Belongs to the adenylosuccinate synthetase family. In terms of assembly, homodimer. Mg(2+) is required as a cofactor.

The protein localises to the cytoplasm. It carries out the reaction IMP + L-aspartate + GTP = N(6)-(1,2-dicarboxyethyl)-AMP + GDP + phosphate + 2 H(+). Its pathway is purine metabolism; AMP biosynthesis via de novo pathway; AMP from IMP: step 1/2. Plays an important role in the de novo pathway of purine nucleotide biosynthesis. Catalyzes the first committed step in the biosynthesis of AMP from IMP. This is Adenylosuccinate synthetase from Deinococcus deserti (strain DSM 17065 / CIP 109153 / LMG 22923 / VCD115).